Here is a 193-residue protein sequence, read N- to C-terminus: Oligoribonuclease (193 aa).

The Exonuclease domain occupies 20 to 183 (FVWLDCEMTG…ADVHESIEEL (164 aa)). Y141 is an active-site residue.

The protein belongs to the oligoribonuclease family.

Its subcellular location is the cytoplasm. Its function is as follows. 3'-to-5' exoribonuclease specific for small oligoribonucleotides. The sequence is that of Oligoribonuclease from Paracidovorax citrulli (strain AAC00-1) (Acidovorax citrulli).